The sequence spans 36 residues: Potassium channel toxin alpha-KTx 23.1 (36 aa).

Cystine bridges form between C6–C26, C12–C31, C16–C33, and C21–C36. C36 carries the cysteine amide modification.

The protein belongs to the short scorpion toxin superfamily. Potassium channel inhibitor family. Alpha-KTx 23 subfamily. As to expression, expressed by the venom gland.

The protein resides in the secreted. Voltage-gated potassium channel inhibitor. Selectively and irreversibly binds (K(d)=2.9 pM) and blocks hKv1.3/KCNA3 potassium channels of human T-lymphocytes. Weakly blocks hKCa3.1/KCNN4, mKv1.1/KCNA1, and hKv1.2/KCNA2 channels. In vivo, high doses (200 ug) produce no symptoms of intoxication when injected into mice. The protein is Potassium channel toxin alpha-KTx 23.1 of Vaejovis mexicanus smithi (Mexican scorpion).